The chain runs to 93 residues: Small ribosomal subunit protein uS19 (93 aa).

The protein belongs to the universal ribosomal protein uS19 family.

Functionally, protein S19 forms a complex with S13 that binds strongly to the 16S ribosomal RNA. The sequence is that of Small ribosomal subunit protein uS19 from Leptospira borgpetersenii serovar Hardjo-bovis (strain JB197).